The sequence spans 67 residues: Alpha-actitoxin-Ms11a-3 (67 aa).

An N-terminal signal peptide occupies residues 1 to 24 (MASKIFFVLAVFLVMSAVLPESFA). 3 cysteine pairs are disulfide-bonded: Cys26–Cys41, Cys33–Cys46, and Cys40–Cys61. Lys66 is subject to Lysine amide.

Its subcellular location is the secreted. It is found in the nematocyst. In terms of biological role, alpha-toxins act on postsynaptic membranes, they bind to the nicotinic acetylcholine receptors (nAChR) and thus inhibit them. This toxin shows inhibition against mouse alpha-1-beta-1-delta-epsilon (CHRNA1-CHRNB1-CHRND-CHRNE) (IC(50)=1215 nM), rat alpha-3-beta-4/CHRNA3-CHRNB4 (IC(50)=5.173 uM), rat alpha-7/CHRNA7 (IC(50)=4.786 uM), human alpha-7/CHRNA7 (IC(50)=8.869 uM), and rat alpha-9-alpha-10/CHRNA9-CHRNA10 (IC(50)=202 nM). Also competes with alpha-bungarotoxin for binding to orthosteric sites on muscle-type T.carlifornicus (IC(50)=256 nM) and human alpha-7/CHRNA7 nAChRs (IC(50)=19.81 uM). The polypeptide is Alpha-actitoxin-Ms11a-3 (Metridium senile (Brown sea anemone)).